We begin with the raw amino-acid sequence, 251 residues long: Pyrroloquinoline-quinone synthase (251 aa).

Belongs to the PqqC family.

It carries out the reaction 6-(2-amino-2-carboxyethyl)-7,8-dioxo-1,2,3,4,7,8-hexahydroquinoline-2,4-dicarboxylate + 3 O2 = pyrroloquinoline quinone + 2 H2O2 + 2 H2O + H(+). It functions in the pathway cofactor biosynthesis; pyrroloquinoline quinone biosynthesis. Ring cyclization and eight-electron oxidation of 3a-(2-amino-2-carboxyethyl)-4,5-dioxo-4,5,6,7,8,9-hexahydroquinoline-7,9-dicarboxylic-acid to PQQ. This is Pyrroloquinoline-quinone synthase from Cronobacter sakazakii (strain ATCC BAA-894) (Enterobacter sakazakii).